A 411-amino-acid chain; its full sequence is Adenylosuccinate synthetase (411 aa).

Residues 11–17 (GDEGKGK) and 39–41 (GHT) contribute to the GTP site. Asp12 serves as the catalytic Proton acceptor. Asp12 and Gly39 together coordinate Mg(2+). Residues 12–15 (DEGK), 37–40 (NAGH), Thr121, Arg135, Gln215, Thr230, and Arg294 each bind IMP. His40 serves as the catalytic Proton donor. 290–296 (TTTKRPR) lines the substrate pocket. GTP-binding positions include Arg296, 322–324 (KLD), and 400–402 (STS).

It belongs to the adenylosuccinate synthetase family. In terms of assembly, homodimer. Requires Mg(2+) as cofactor.

It localises to the cytoplasm. It carries out the reaction IMP + L-aspartate + GTP = N(6)-(1,2-dicarboxyethyl)-AMP + GDP + phosphate + 2 H(+). The protein operates within purine metabolism; AMP biosynthesis via de novo pathway; AMP from IMP: step 1/2. In terms of biological role, plays an important role in the de novo pathway of purine nucleotide biosynthesis. Catalyzes the first committed step in the biosynthesis of AMP from IMP. This is Adenylosuccinate synthetase from Helicobacter pylori (strain J99 / ATCC 700824) (Campylobacter pylori J99).